Here is a 697-residue protein sequence, read N- to C-terminus: General transcription factor IIH subunit 1 (697 aa).

The span at 115-136 (LPVSASNGSNTTSPTNGTSPIN) shows a compositional bias: low complexity. 2 disordered regions span residues 115-141 (LPVS…TSPT) and 228-250 (KNDS…ADVR). 2 BSD domains span residues 174-231 (LSKL…KNDS) and 255-307 (TPNA…YFYR). Positions 412–422 (KNLKKTKKDEN) are enriched in basic and acidic residues. The interval 412 to 462 (KNLKKTKKDENSTSTPTTTTTTTNTTNTTNTTTTTTTNNTTIKDPNLYNGD) is disordered. A compositionally biased stretch (low complexity) spans 423 to 452 (STSTPTTTTTTTNTTNTTNTTTTTTTNNTT).

It belongs to the TFB1 family. In terms of assembly, component of the 7-subunit TFIIH core complex composed of XPB/repB, XPD/repD, gtf2h1, gtf2h2, gtf2h3, gtf2h4 and gtf2h5, which is active in NER. The core complex associates with the 3-subunit CDK-activating kinase (CAK) module composed of cycH/cyclin H, cdk7 and mnat1 to form the 10-subunit holoenzyme (holo-TFIIH) active in transcription.

It localises to the nucleus. Functionally, component of the general transcription and DNA repair factor IIH (TFIIH) core complex, which is involved in general and transcription-coupled nucleotide excision repair (NER) of damaged DNA and, when complexed to CAK, in RNA transcription by RNA polymerase II. In NER, TFIIH acts by opening DNA around the lesion to allow the excision of the damaged oligonucleotide and its replacement by a new DNA fragment. In transcription, TFIIH has an essential role in transcription initiation. When the pre-initiation complex (PIC) has been established, TFIIH is required for promoter opening and promoter escape. Phosphorylation of the C-terminal tail (CTD) of the largest subunit of RNA polymerase II by the kinase module CAK controls the initiation of transcription. The chain is General transcription factor IIH subunit 1 (gtf2h1) from Dictyostelium discoideum (Social amoeba).